A 503-amino-acid chain; its full sequence is WD repeat-containing protein 55 homolog (503 aa).

2 disordered regions span residues 1 to 21 (MHTH…DLDD) and 35 to 132 (ALVG…DDLD). Composition is skewed to acidic residues over residues 12–21 (DADELDDLDD), 40–50 (DVSDSDIDEHD), and 78–96 (NAED…DEAE). 6 WD repeats span residues 157–196 (KLED…NKLL), 201–242 (VHSK…KLYE), 244–282 (AHDD…PIFE), 285–324 (EVED…LYVQ), 327–366 (PYEE…YHCD), and 411–450 (QHNM…DFGD). The segment at 483-503 (TKEDEDNADNNDAAAGPSNSA) is disordered.

The protein belongs to the WD repeat WDR55 family.

The polypeptide is WD repeat-containing protein 55 homolog (Drosophila persimilis (Fruit fly)).